A 286-amino-acid polypeptide reads, in one-letter code: Protein Bride of doubletime (286 aa).

In terms of assembly, interacts with dco (via nuclear localization signal). Interacts with Ankrd49; interaction promotes the stability of both complex members.

It localises to the cytoplasm. It is found in the cytosol. Its subcellular location is the cell membrane. Functionally, functions in planar polarity establishment and circadian rhythms by promoting the activity and localization of dco/dbt. Required for regulating the levels of dco/dbt and per in the nuclei of photoreceptor cells and thereby is involved in normal oscillations of the circadian clock proteins in the eye. In the dark, the cry circadian and rhodopsin visual pathways, activate the accumulation of the protein into Arr1- and Arr2-dependent cytosolic foci which are required for dco localization to photoreceptor nuclei. It is possible that the accumulation into foci results in the dissociation of the protein from dco, thus allowing dco to interact with importins and microtubles for nuclear transport. By promoting nuclei localization and kinase activity of dco towards per, it is essential for regulating normal cycles of per nuclear accumulation in brain circadian neurons and thus is important for normal circadian behavior. Essential for regulating the establishment of planar cell polarity in the wing. Forms a complex with Ankrd49 which likely functions in the regulation of planar polarity by promoting the activity of dco during planar polarity establishment. Within the complex, directly promotes dco activity in regulating phosphorylation and asymmetric localization of core planar polarity proteins such as dsh. The protein is Protein Bride of doubletime of Drosophila melanogaster (Fruit fly).